The primary structure comprises 439 residues: Type 3 secretion system ATPase (439 aa).

172 to 177 (GGGKST) contacts ATP.

It belongs to the ATPase alpha/beta chains family. T3SS ATPase subfamily. The core secretion machinery of the T3SS is composed of approximately 20 different proteins, including cytoplasmic components, a base, an export apparatus and a needle. This subunit is part of the cytosolic complex. Forms homohexamers.

The protein resides in the cytoplasm. It carries out the reaction ATP + H2O + cellular proteinSide 1 = ADP + phosphate + cellular proteinSide 2.. In terms of biological role, ATPase component of the type III secretion system (T3SS), also called injectisome, which is used to inject bacterial effector proteins into eukaryotic host cells. Acts as a molecular motor to provide the energy that is required for the export of proteins. Required for type III secretion apparatus (T3SA) formation, proper protein secretion, host cell invasion and virulence. May play a critical role in T3SS substrate recognition, disassembly of the effector/chaperone complex and unfolding of the effector in an ATP-dependent manner prior to secretion. This chain is Type 3 secretion system ATPase, found in Yersinia pseudotuberculosis serotype I (strain IP32953).